The sequence spans 528 residues: Probable methylmalonate-semialdehyde/malonate-semialdehyde dehydrogenase [acylating], mitochondrial (528 aa).

Residues 1–26 constitute a mitochondrion transit peptide; it reads MLSFKFAKSASKVIGNRNFHSSSASL. Residues F175, K199, E202, and R203 each coordinate NAD(+). Residue C307 is the Nucleophile of the active site. An NAD(+)-binding site is contributed by E408.

It belongs to the aldehyde dehydrogenase family. In terms of assembly, homotetramer.

The protein localises to the mitochondrion. It catalyses the reaction 2-methyl-3-oxopropanoate + NAD(+) + CoA + H2O = propanoyl-CoA + hydrogencarbonate + NADH + H(+). The enzyme catalyses 3-oxopropanoate + NAD(+) + CoA + H2O = hydrogencarbonate + acetyl-CoA + NADH + H(+). Probable malonate and methylmalonate semialdehyde dehydrogenase involved in the catabolism of valine, thymine, and compounds catabolized by way of beta-alanine, including uracil and cytidine. This Dictyostelium discoideum (Social amoeba) protein is Probable methylmalonate-semialdehyde/malonate-semialdehyde dehydrogenase [acylating], mitochondrial (mmsdh).